The sequence spans 352 residues: Protein-glutamate methylesterase/protein-glutamine glutaminase 2 (352 aa).

The Response regulatory domain maps to Met-1–Glu-116. At Asp-50 the chain carries 4-aspartylphosphate. A CheB-type methylesterase domain is found at Ala-162–Gln-352. Residues Ser-174, His-200, and Asp-296 contribute to the active site.

This sequence belongs to the CheB family. Post-translationally, phosphorylated by CheA. Phosphorylation of the N-terminal regulatory domain activates the methylesterase activity.

The protein localises to the cytoplasm. The enzyme catalyses [protein]-L-glutamate 5-O-methyl ester + H2O = L-glutamyl-[protein] + methanol + H(+). It carries out the reaction L-glutaminyl-[protein] + H2O = L-glutamyl-[protein] + NH4(+). In terms of biological role, involved in chemotaxis. Part of a chemotaxis signal transduction system that modulates chemotaxis in response to various stimuli. Catalyzes the demethylation of specific methylglutamate residues introduced into the chemoreceptors (methyl-accepting chemotaxis proteins or MCP) by CheR. Also mediates the irreversible deamidation of specific glutamine residues to glutamic acid. This is Protein-glutamate methylesterase/protein-glutamine glutaminase 2 from Xanthomonas euvesicatoria pv. vesicatoria (strain 85-10) (Xanthomonas campestris pv. vesicatoria).